Here is a 157-residue protein sequence, read N- to C-terminus: Peptide methionine sulfoxide reductase MsrA (157 aa).

The active site involves C10.

This sequence belongs to the MsrA Met sulfoxide reductase family.

The catalysed reaction is L-methionyl-[protein] + [thioredoxin]-disulfide + H2O = L-methionyl-(S)-S-oxide-[protein] + [thioredoxin]-dithiol. It carries out the reaction [thioredoxin]-disulfide + L-methionine + H2O = L-methionine (S)-S-oxide + [thioredoxin]-dithiol. Functionally, has an important function as a repair enzyme for proteins that have been inactivated by oxidation. Catalyzes the reversible oxidation-reduction of methionine sulfoxide in proteins to methionine. The protein is Peptide methionine sulfoxide reductase MsrA of Clostridium perfringens (strain ATCC 13124 / DSM 756 / JCM 1290 / NCIMB 6125 / NCTC 8237 / Type A).